The chain runs to 274 residues: uncharacterized protein (274 aa).

It belongs to the PhoU family.

This is an uncharacterized protein from Deinococcus radiodurans (strain ATCC 13939 / DSM 20539 / JCM 16871 / CCUG 27074 / LMG 4051 / NBRC 15346 / NCIMB 9279 / VKM B-1422 / R1).